A 567-amino-acid polypeptide reads, in one-letter code: Methionine--tRNA ligase (567 aa).

The 'HIGH' region motif lies at 11-21; the sequence is PYVQTVPHLGN. Positions 143, 146, 156, and 159 each coordinate Zn(2+). A 'KMSKS' region motif is present at residues 331 to 335; the sequence is KFSKS. K334 lines the ATP pocket.

The protein belongs to the class-I aminoacyl-tRNA synthetase family. MetG type 1 subfamily. It depends on Zn(2+) as a cofactor.

The protein localises to the cytoplasm. The enzyme catalyses tRNA(Met) + L-methionine + ATP = L-methionyl-tRNA(Met) + AMP + diphosphate. In terms of biological role, is required not only for elongation of protein synthesis but also for the initiation of all mRNA translation through initiator tRNA(fMet) aminoacylation. This is Methionine--tRNA ligase from Pyrobaculum islandicum (strain DSM 4184 / JCM 9189 / GEO3).